The sequence spans 223 residues: Endonuclease V (223 aa).

Asp-45 and Asp-113 together coordinate Mg(2+).

The protein belongs to the endonuclease V family. It depends on Mg(2+) as a cofactor.

Its subcellular location is the cytoplasm. It catalyses the reaction Endonucleolytic cleavage at apurinic or apyrimidinic sites to products with a 5'-phosphate.. Functionally, DNA repair enzyme involved in the repair of deaminated bases. Selectively cleaves double-stranded DNA at the second phosphodiester bond 3' to a deoxyinosine leaving behind the intact lesion on the nicked DNA. The protein is Endonuclease V of Dehalococcoides mccartyi (strain CBDB1).